The sequence spans 110 residues: NAD(P)H-quinone oxidoreductase subunit M (110 aa).

It belongs to the complex I NdhM subunit family. NDH-1 can be composed of about 15 different subunits; different subcomplexes with different compositions have been identified which probably have different functions.

It localises to the cellular thylakoid membrane. It carries out the reaction a plastoquinone + NADH + (n+1) H(+)(in) = a plastoquinol + NAD(+) + n H(+)(out). The catalysed reaction is a plastoquinone + NADPH + (n+1) H(+)(in) = a plastoquinol + NADP(+) + n H(+)(out). Its function is as follows. NDH-1 shuttles electrons from an unknown electron donor, via FMN and iron-sulfur (Fe-S) centers, to quinones in the respiratory and/or the photosynthetic chain. The immediate electron acceptor for the enzyme in this species is believed to be plastoquinone. Couples the redox reaction to proton translocation, and thus conserves the redox energy in a proton gradient. Cyanobacterial NDH-1 also plays a role in inorganic carbon-concentration. This Synechococcus elongatus (strain ATCC 33912 / PCC 7942 / FACHB-805) (Anacystis nidulans R2) protein is NAD(P)H-quinone oxidoreductase subunit M.